Reading from the N-terminus, the 432-residue chain is 3-phosphoshikimate 1-carboxyvinyltransferase (432 aa).

Lys23, Ser24, and Arg28 together coordinate 3-phosphoshikimate. Lys23 contacts phosphoenolpyruvate. 2 residues coordinate phosphoenolpyruvate: Gly95 and Arg123. 3-phosphoshikimate contacts are provided by Ser167, Gln169, Asp317, and Lys344. Phosphoenolpyruvate is bound at residue Gln169. Asp317 acts as the Proton acceptor in catalysis. Phosphoenolpyruvate is bound by residues Arg348 and Arg390.

Belongs to the EPSP synthase family. Monomer.

It is found in the cytoplasm. The enzyme catalyses 3-phosphoshikimate + phosphoenolpyruvate = 5-O-(1-carboxyvinyl)-3-phosphoshikimate + phosphate. The protein operates within metabolic intermediate biosynthesis; chorismate biosynthesis; chorismate from D-erythrose 4-phosphate and phosphoenolpyruvate: step 6/7. In terms of biological role, catalyzes the transfer of the enolpyruvyl moiety of phosphoenolpyruvate (PEP) to the 5-hydroxyl of shikimate-3-phosphate (S3P) to produce enolpyruvyl shikimate-3-phosphate and inorganic phosphate. In Staphylococcus aureus (strain COL), this protein is 3-phosphoshikimate 1-carboxyvinyltransferase.